A 605-amino-acid polypeptide reads, in one-letter code: Probable potassium transport system protein Kup (605 aa).

The next 12 membrane-spanning stretches (helical) occupy residues Gly-17–Leu-37, Val-45–Ala-65, Ile-96–Ile-116, Leu-140–Lys-160, Val-165–Leu-185, Gly-211–Leu-231, Ala-246–Leu-266, Leu-286–Ile-306, Ile-338–Phe-358, Ala-367–Phe-387, Trp-394–Leu-414, and Leu-417–Ile-437.

Belongs to the HAK/KUP transporter (TC 2.A.72) family.

It is found in the cell inner membrane. It catalyses the reaction K(+)(in) + H(+)(in) = K(+)(out) + H(+)(out). Its function is as follows. Transport of potassium into the cell. Likely operates as a K(+):H(+) symporter. The protein is Probable potassium transport system protein Kup of Geotalea uraniireducens (strain Rf4) (Geobacter uraniireducens).